A 460-amino-acid polypeptide reads, in one-letter code: Argininosuccinate lyase (460 aa).

Belongs to the lyase 1 family. Argininosuccinate lyase subfamily.

The protein localises to the cytoplasm. The catalysed reaction is 2-(N(omega)-L-arginino)succinate = fumarate + L-arginine. The protein operates within amino-acid biosynthesis; L-arginine biosynthesis; L-arginine from L-ornithine and carbamoyl phosphate: step 3/3. In Alteromonas mediterranea (strain DSM 17117 / CIP 110805 / LMG 28347 / Deep ecotype), this protein is Argininosuccinate lyase.